A 205-amino-acid chain; its full sequence is Phosphoribosyl-dephospho-CoA transferase (205 aa).

Residues Asp134 and Asp136 contribute to the active site.

It belongs to the MdcG family.

It carries out the reaction apo-[malonate decarboxylase ACP] + 2'-(5''-triphospho-alpha-D-ribosyl)-3'-dephospho-CoA = holo-[malonate decarboxylase ACP] + diphosphate. Functionally, transfers 2'-(5-triphosphoribosyl)-3'-dephosphocoenzyme-A to the apo-[acyl-carrier-protein] of the malonate decarboxylase to yield holo-[acyl-carrier-protein]. In Klebsiella pneumoniae subsp. pneumoniae (strain ATCC 700721 / MGH 78578), this protein is Phosphoribosyl-dephospho-CoA transferase.